We begin with the raw amino-acid sequence, 240 residues long: RxLR effector protein PexRD20 (240 aa).

The N-terminal stretch at 1-23 (MRCHYFVLLAVAAFLAGANVAVA) is a signal peptide. The RxLR-dEER motif lies at 43-58 (RALRSHTKATDHGEER).

The protein belongs to the RxLR effector family.

It localises to the secreted. The protein localises to the host cytoplasm. It is found in the host nucleus. The protein resides in the host nucleolus. Its function is as follows. Effector that enhances P.infestans colonization of Nicotiana benthamiana leaves. The sequence is that of RxLR effector protein PexRD20 from Phytophthora infestans (strain T30-4) (Potato late blight agent).